Consider the following 472-residue polypeptide: Probable glycine dehydrogenase (decarboxylating) subunit 2 (472 aa).

Position 268 is an N6-(pyridoxal phosphate)lysine (lysine 268).

Belongs to the GcvP family. C-terminal subunit subfamily. The glycine cleavage system is composed of four proteins: P, T, L and H. In this organism, the P 'protein' is a heterodimer of two subunits. The cofactor is pyridoxal 5'-phosphate.

It carries out the reaction N(6)-[(R)-lipoyl]-L-lysyl-[glycine-cleavage complex H protein] + glycine + H(+) = N(6)-[(R)-S(8)-aminomethyldihydrolipoyl]-L-lysyl-[glycine-cleavage complex H protein] + CO2. In terms of biological role, the glycine cleavage system catalyzes the degradation of glycine. The P protein binds the alpha-amino group of glycine through its pyridoxal phosphate cofactor; CO(2) is released and the remaining methylamine moiety is then transferred to the lipoamide cofactor of the H protein. In Thermoplasma volcanium (strain ATCC 51530 / DSM 4299 / JCM 9571 / NBRC 15438 / GSS1), this protein is Probable glycine dehydrogenase (decarboxylating) subunit 2.